A 337-amino-acid chain; its full sequence is Holliday junction branch migration complex subunit RuvB (337 aa).

Residues 1-182 form a large ATPase domain (RuvB-L) region; the sequence is MEDRMVSASY…FGVLSAMEFY (182 aa). ATP contacts are provided by Leu21, Arg22, Gly63, Lys66, Thr67, Thr68, Arg172, Tyr182, and Arg219. Thr67 contacts Mg(2+). The interval 183–253 is small ATPAse domain (RuvB-S); it reads NEDELKEIIL…IAKNALSLLE (71 aa). The interval 256–337 is head domain (RuvB-H); that stretch reads GEGFDKIDNK…REFKEQTKLT (82 aa). Residues Arg311 and Arg316 each coordinate DNA.

The protein belongs to the RuvB family. In terms of assembly, homohexamer. Forms an RuvA(8)-RuvB(12)-Holliday junction (HJ) complex. HJ DNA is sandwiched between 2 RuvA tetramers; dsDNA enters through RuvA and exits via RuvB. An RuvB hexamer assembles on each DNA strand where it exits the tetramer. Each RuvB hexamer is contacted by two RuvA subunits (via domain III) on 2 adjacent RuvB subunits; this complex drives branch migration. In the full resolvosome a probable DNA-RuvA(4)-RuvB(12)-RuvC(2) complex forms which resolves the HJ.

It is found in the cytoplasm. It catalyses the reaction ATP + H2O = ADP + phosphate + H(+). Functionally, the RuvA-RuvB-RuvC complex processes Holliday junction (HJ) DNA during genetic recombination and DNA repair, while the RuvA-RuvB complex plays an important role in the rescue of blocked DNA replication forks via replication fork reversal (RFR). RuvA specifically binds to HJ cruciform DNA, conferring on it an open structure. The RuvB hexamer acts as an ATP-dependent pump, pulling dsDNA into and through the RuvAB complex. RuvB forms 2 homohexamers on either side of HJ DNA bound by 1 or 2 RuvA tetramers; 4 subunits per hexamer contact DNA at a time. Coordinated motions by a converter formed by DNA-disengaged RuvB subunits stimulates ATP hydrolysis and nucleotide exchange. Immobilization of the converter enables RuvB to convert the ATP-contained energy into a lever motion, pulling 2 nucleotides of DNA out of the RuvA tetramer per ATP hydrolyzed, thus driving DNA branch migration. The RuvB motors rotate together with the DNA substrate, which together with the progressing nucleotide cycle form the mechanistic basis for DNA recombination by continuous HJ branch migration. Branch migration allows RuvC to scan DNA until it finds its consensus sequence, where it cleaves and resolves cruciform DNA. The sequence is that of Holliday junction branch migration complex subunit RuvB from Clostridium novyi (strain NT).